A 108-amino-acid polypeptide reads, in one-letter code: Tubulin-specific chaperone A (108 aa).

The residue at position 2 (alanine 2) is an N-acetylalanine.

The protein belongs to the TBCA family. In terms of assembly, supercomplex made of cofactors A to E. Cofactors A and D function by capturing and stabilizing tubulin in a quasi-native conformation. Cofactor E binds to the cofactor D-tubulin complex; interaction with cofactor C then causes the release of tubulin polypeptides that are committed to the native state.

The protein localises to the cytoplasm. Its subcellular location is the cytoskeleton. In terms of biological role, tubulin-folding protein; involved in the early step of the tubulin folding pathway. The chain is Tubulin-specific chaperone A (TBCA) from Homo sapiens (Human).